Reading from the N-terminus, the 124-residue chain is MPRLKTRREKRLRRHKRIRKKVFGTPERPRLCVYRSLKHFYAQIIDDTIGHTLVSASTLDPEFEKITGKRGGKSIKDAEVVAEIIARRALEKGIKKVVFDRGGFKYHGKIKAFADKCREMGLEF.

It belongs to the universal ribosomal protein uL18 family. In terms of assembly, part of the 50S ribosomal subunit; part of the 5S rRNA/L5/L18/L25 subcomplex. Contacts the 5S and 23S rRNAs.

In terms of biological role, this is one of the proteins that bind and probably mediate the attachment of the 5S RNA into the large ribosomal subunit, where it forms part of the central protuberance. This chain is Large ribosomal subunit protein uL18, found in Aquifex aeolicus (strain VF5).